The primary structure comprises 212 residues: Large ribosomal subunit protein uL3 (212 aa).

Residues 147–166 (GSTGQNQSPGKVFKGKKMPG) are disordered. Q153 carries the N5-methylglutamine modification.

This sequence belongs to the universal ribosomal protein uL3 family. As to quaternary structure, part of the 50S ribosomal subunit. Forms a cluster with proteins L14 and L19. Methylated by PrmB.

Functionally, one of the primary rRNA binding proteins, it binds directly near the 3'-end of the 23S rRNA, where it nucleates assembly of the 50S subunit. The sequence is that of Large ribosomal subunit protein uL3 from Psychrobacter sp. (strain PRwf-1).